Here is a 144-residue protein sequence, read N- to C-terminus: D-aminoacyl-tRNA deacylase (144 aa).

The Gly-cisPro motif, important for rejection of L-amino acids signature appears at 136–137 (GP).

This sequence belongs to the DTD family. Homodimer.

The protein localises to the cytoplasm. The catalysed reaction is glycyl-tRNA(Ala) + H2O = tRNA(Ala) + glycine + H(+). It catalyses the reaction a D-aminoacyl-tRNA + H2O = a tRNA + a D-alpha-amino acid + H(+). In terms of biological role, an aminoacyl-tRNA editing enzyme that deacylates mischarged D-aminoacyl-tRNAs. Also deacylates mischarged glycyl-tRNA(Ala), protecting cells against glycine mischarging by AlaRS. Acts via tRNA-based rather than protein-based catalysis; rejects L-amino acids rather than detecting D-amino acids in the active site. By recycling D-aminoacyl-tRNA to D-amino acids and free tRNA molecules, this enzyme counteracts the toxicity associated with the formation of D-aminoacyl-tRNA entities in vivo and helps enforce protein L-homochirality. The sequence is that of D-aminoacyl-tRNA deacylase from Haemophilus influenzae (strain PittEE).